A 355-amino-acid polypeptide reads, in one-letter code: DNA-directed RNA polymerase subunit alpha (355 aa).

The tract at residues 1–248 (MYYDDGIPVF…EQLQPFISSD (248 aa)) is alpha N-terminal domain (alpha-NTD). The tract at residues 267–355 (YDPILLRKVD…ELARQHTDED (89 aa)) is alpha C-terminal domain (alpha-CTD).

It belongs to the RNA polymerase alpha chain family. Homodimer. The RNAP catalytic core consists of 2 alpha, 1 beta, 1 beta' and 1 omega subunit. When a sigma factor is associated with the core the holoenzyme is formed, which can initiate transcription.

The catalysed reaction is RNA(n) + a ribonucleoside 5'-triphosphate = RNA(n+1) + diphosphate. In terms of biological role, DNA-dependent RNA polymerase catalyzes the transcription of DNA into RNA using the four ribonucleoside triphosphates as substrates. The sequence is that of DNA-directed RNA polymerase subunit alpha from Wolbachia sp. subsp. Brugia malayi (strain TRS).